The sequence spans 382 residues: Lipid-A-disaccharide synthase (382 aa).

It belongs to the LpxB family.

It carries out the reaction 2-N,3-O-bis[(3R)-3-hydroxytetradecanoyl]-alpha-D-glucosaminyl 1-phosphate + UDP-2-N,3-O-bis[(3R)-3-hydroxytetradecanoyl]-alpha-D-glucosamine = lipid A disaccharide (E. coli) + UDP + H(+). It catalyses the reaction a lipid X + a UDP-2-N,3-O-bis[(3R)-3-hydroxyacyl]-alpha-D-glucosamine = a lipid A disaccharide + UDP + H(+). Its pathway is glycolipid biosynthesis; lipid IV(A) biosynthesis; lipid IV(A) from (3R)-3-hydroxytetradecanoyl-[acyl-carrier-protein] and UDP-N-acetyl-alpha-D-glucosamine: step 5/6. Its function is as follows. Condensation of UDP-2,3-diacylglucosamine and 2,3-diacylglucosamine-1-phosphate to form lipid A disaccharide, a precursor of lipid A, a phosphorylated glycolipid that anchors the lipopolysaccharide to the outer membrane of the cell. The chain is Lipid-A-disaccharide synthase from Salmonella paratyphi A (strain AKU_12601).